Here is a 529-residue protein sequence, read N- to C-terminus: UDP-glucuronosyltransferase 2B1 (529 aa).

The first 23 residues, 1–23 (MSMKQTSVFLLIQLICYFRPGAC), serve as a signal peptide directing secretion. Asn-134 and Asn-316 each carry an N-linked (GlcNAc...) asparagine glycan. Residues 494-510 (VIGFLLLCVVGVVFIIT) form a helical membrane-spanning segment.

It belongs to the UDP-glycosyltransferase family.

The protein resides in the endoplasmic reticulum membrane. The catalysed reaction is glucuronate acceptor + UDP-alpha-D-glucuronate = acceptor beta-D-glucuronoside + UDP + H(+). The enzyme catalyses 17beta-estradiol + UDP-alpha-D-glucuronate = 17beta-estradiol 17-O-(beta-D-glucuronate) + UDP + H(+). Functionally, UDP-glucuronosyltransferase (UGT) that catalyzes phase II biotransformation reactions in which lipophilic substrates are conjugated with glucuronic acid to increase the metabolite's water solubility, thereby facilitating excretion into either the urine or bile. Essential for the elimination and detoxification of drugs, xenobiotics and endogenous compounds. Catalyzes the glucuronidation of the endogenous estrogen hormone estradiol. In Rattus norvegicus (Rat), this protein is UDP-glucuronosyltransferase 2B1.